The sequence spans 131 residues: Small ribosomal subunit protein uS11 (131 aa).

Residues 1 to 15 (MAAKTVKKTRRRKER) show a composition bias toward basic residues. Residues 1-23 (MAAKTVKKTRRRKERKNVEHGAA) form a disordered region.

It belongs to the universal ribosomal protein uS11 family. As to quaternary structure, part of the 30S ribosomal subunit. Interacts with proteins S7 and S18. Binds to IF-3.

Located on the platform of the 30S subunit, it bridges several disparate RNA helices of the 16S rRNA. Forms part of the Shine-Dalgarno cleft in the 70S ribosome. This chain is Small ribosomal subunit protein uS11, found in Clostridium beijerinckii (strain ATCC 51743 / NCIMB 8052) (Clostridium acetobutylicum).